The following is a 474-amino-acid chain: AAA-ATPase At3g28610 (474 aa).

The signal sequence occupies residues 1-25 (MMGNMFGSSLASLFFLWATIQQIFP). ATP is bound at residue 244-251 (GPPGTGKS).

Belongs to the AAA ATPase family. BCS1 subfamily. Requires Mg(2+) as cofactor.

The catalysed reaction is ATP + H2O = ADP + phosphate + H(+). In Arabidopsis thaliana (Mouse-ear cress), this protein is AAA-ATPase At3g28610.